A 739-amino-acid polypeptide reads, in one-letter code: Polyribonucleotide nucleotidyltransferase (739 aa).

The Mg(2+) site is built by aspartate 489 and aspartate 495. Residues 556–615 (PKIDTIKIDVDKIKIVIGKGGETIDKIIAETGVKIDIDEDGLVAIFSPDRAAIERTKEII) form the KH domain. Residues 625–693 (DEVFQAKVVR…DKGRIDASMK (69 aa)) enclose the S1 motif domain. Positions 699-739 (PEGYVEPEKRERSEKPRRHKEHKEKKDNNFGEFKFHKVDKK) are disordered. The segment covering 722–739 (EKKDNNFGEFKFHKVDKK) has biased composition (basic and acidic residues).

The protein belongs to the polyribonucleotide nucleotidyltransferase family. Mg(2+) serves as cofactor.

Its subcellular location is the cytoplasm. It catalyses the reaction RNA(n+1) + phosphate = RNA(n) + a ribonucleoside 5'-diphosphate. In terms of biological role, involved in mRNA degradation. Catalyzes the phosphorolysis of single-stranded polyribonucleotides processively in the 3'- to 5'-direction. This is Polyribonucleotide nucleotidyltransferase from Streptococcus suis (strain 98HAH33).